We begin with the raw amino-acid sequence, 198 residues long: Glycerol-3-phosphate acyltransferase (198 aa).

The next 6 helical transmembrane spans lie at M1–A21, V55–L75, W79–W99, I111–I131, I136–F156, and G158–W178.

This sequence belongs to the PlsY family. As to quaternary structure, probably interacts with PlsX.

The protein localises to the cell inner membrane. The catalysed reaction is an acyl phosphate + sn-glycerol 3-phosphate = a 1-acyl-sn-glycero-3-phosphate + phosphate. It functions in the pathway lipid metabolism; phospholipid metabolism. Catalyzes the transfer of an acyl group from acyl-phosphate (acyl-PO(4)) to glycerol-3-phosphate (G3P) to form lysophosphatidic acid (LPA). This enzyme utilizes acyl-phosphate as fatty acyl donor, but not acyl-CoA or acyl-ACP. This Prochlorococcus marinus (strain NATL2A) protein is Glycerol-3-phosphate acyltransferase.